We begin with the raw amino-acid sequence, 264 residues long: MKIEAVIFDWAGTTVDYGCFAPLEVFMEIFYKRGVGITAEEARKPMGLLKIDHVRALTEMPRIANEWNRIFGQLPTETDIQEMYEEFEEILFAILPRYASPIHGVKEVIASLRERGIKIGSTTGYTREMMDIVAKEAALQGYKPDFLVTPDDVPAGRPYPWMCYKNAMELGVYPMNHMIKIGDTVSDMKEGRNAGMWTVGVILGSSELGLSEEEVENMDSAELREKIEVVRNRFVENGAHFTIETMQELESVMERIEKQELIIS.

Residue aspartate 9 is the Nucleophile of the active site. Residues aspartate 9 and alanine 11 each contribute to the Mg(2+) site. Lysine 50 acts as the Schiff-base intermediate with substrate in catalysis. Aspartate 183 lines the Mg(2+) pocket.

This sequence belongs to the HAD-like hydrolase superfamily. PhnX family. Homodimer. Requires Mg(2+) as cofactor.

The enzyme catalyses phosphonoacetaldehyde + H2O = acetaldehyde + phosphate + H(+). Functionally, involved in phosphonate degradation. In Bacillus thuringiensis (strain Al Hakam), this protein is Phosphonoacetaldehyde hydrolase.